The chain runs to 707 residues: MAGSRLPRQLFLQGVAAVFMFAFASLYTQIPGLYGPEGILPARRTLRPQGKGRWQQLWETPTLLWEAPRLGLDTAQGLELLSLLGALVALGALLLSPLRHPVIYLLLWAAYLSACQVGQVFLYFQWDSLLLETGFLAVLVAPLRPASHRKEAPQGRQAGALPHEDLPFWLVRWLLFRLMFASGVVKLTSRCPAWWGLTALTYHYETQCLPTPAAWFAHHLPVWLHKLSVVATFLIEIAVPPLFFAPIRRLRLAAFYSQVLLQVLIIITGNYNFFNLMTLVLTTALLDDQHLAAEPGHGSRKKTATSWPKALLATLSLLLELAVYGLLAYGTVHYFGLEVDWQQRTIHSRTTFTFHQFSQWLKTLTLPTVWLGVASLVWELLSALWRWTQVRGWLRKLSAVVQLSLVGTATVALFLISLVPYSYVEPGTHGRLWTGAHRLFGAVEHLQLANSYGLFRRMTGLGGRPEVVLEGSYDGHHWTEIEFMYKPGNLSRPPPVVVPHQPRLDWQMWFAALGPHTHSPWFTSLVLRLLQGKEPVIRLVQSQVARYPFHKQPPTYVRAQRYKYWFSQPGEQGQWWRRQWVEEFFPSVSLGDPTLETLLRQFGLQEKSPPRTRSANSTLAQALHWTRSQLSPLEAPALLWGLLMAVGAVRFVQALLAPCSLRSSPLAPVSGEKRRPASQKDSGAASEQATAAPNPCSSSSRTTRRKK.

10 helical membrane passes run 10 to 30 (LFLQGVAAVFMFAFASLYTQI), 78 to 98 (LELLSLLGALVALGALLLSPL), 102 to 122 (VIYLLLWAAYLSACQVGQVFL), 123 to 143 (YFQWDSLLLETGFLAVLVAPL), 165 to 185 (DLPFWLVRWLLFRLMFASGVV), 227 to 247 (LSVVATFLIEIAVPPLFFAPI), 259 to 279 (VLLQVLIIITGNYNFFNLMTL), 310 to 330 (ALLATLSLLLELAVYGLLAYG), 364 to 384 (LTLPTVWLGVASLVWELLSAL), and 399 to 419 (AVVQLSLVGTATVALFLISLV). 2 N-linked (GlcNAc...) asparagine glycosylation sites follow: N489 and N616. Residues 637–657 (ALLWGLLMAVGAVRFVQALLA) traverse the membrane as a helical segment. A disordered region spans residues 665 to 707 (PLAPVSGEKRRPASQKDSGAASEQATAAPNPCSSSSRTTRRKK). The span at 679-691 (QKDSGAASEQATA) shows a compositional bias: polar residues.

This sequence belongs to the lipase maturation factor family.

It localises to the endoplasmic reticulum membrane. Its function is as follows. Involved in the maturation of specific proteins in the endoplasmic reticulum. May be required for maturation and transport of active lipoprotein lipase (LPL) through the secretory pathway. This Homo sapiens (Human) protein is Lipase maturation factor 2 (LMF2).